We begin with the raw amino-acid sequence, 162 residues long: Protein A49R (162 aa).

Belongs to the poxviridae A49 protein family. As to quaternary structure, interacts with host BTRC; this interaction inhibits NF-kappa-B activation.

The protein localises to the host cytoplasm. The protein resides in the host nucleus. In terms of biological role, plays a role in the inhibition of host NF-kappa-B activation. Interacts with host BTRC and thereby diminishes ubiquitination of NF-kappa-B inhibitor alpha/NFKBIA. This stabilizes NFKBIA and its interaction with NF-kappaB, so retaining p65/RELA in the cytoplasm and preventing NF-kappa-B-dependent gene expression. This is Protein A49R from Bos taurus (Bovine).